Here is a 596-residue protein sequence, read N- to C-terminus: Transcription factor EGL1 (596 aa).

The region spanning 401–450 (EETGNHALSEKKRREKLNERFMTLRSIIPSISKIDKVSILDDTIEYLQDL) is the bHLH domain.

In terms of assembly, efficient DNA binding requires dimerization with another bHLH protein. Homodimer and heterodimer with GL3. Interacts with CPC, MYB0/GL1, MYB5, MYB23, MYB113, MYB114, MYB75/PAP1, MYB90/PAP2, TT2, TRY, TTG1 and MYB66/WER. Ubiquitous with higher levels in buds and flowers. Specifically localized in developing root hair cells. Expressed in epidermal root hair cells (trichoblasts) and moves to root hairless cells (atrichoblasts) by a cell-to-cell movement through plasmodesmata (at protein level).

It is found in the nucleus. Its function is as follows. Transcription activator, when associated with MYB75/PAP1, MYB90/PAP2 or TT2. Involved in epidermal cell fate specification. Negatively regulates stomata formation but promotes trichome formation. Together with MYB66/WER, promotes the formation of non-hair cells in root epidermis cells in the N position. Whereas together with CPC, promotes the formation of hair cells in root epidermis cells in the H position by inhibiting non-hair cell formation. Also seems to play a role in the activation of anthocyanin biosynthesis, probably together with MYB75/PAP1. Involved in seed mucilage production. Activates the transcription of GL2. This is Transcription factor EGL1 (BHLH2) from Arabidopsis thaliana (Mouse-ear cress).